The primary structure comprises 90 residues: Inner kinetochore subunit MHF1 (90 aa).

This sequence belongs to the TAF9 family. CENP-S/MHF1 subfamily. The MHF histone-fold complex is a heterotetramer of 2 MHF1-MHF2 heterodimers. Together with MPH1/FANCM, forms the FANCM-MHF complex. Component of the inner kinetochore constitutive centromere-associated network (CCAN) (also known as central kinetochore CTF19 complex in yeast), which is composed of at least AME1, CHL4, CNN1, CTF3, CTF19, IML3, MCM16, MCM21, MCM22, MHF1, MHF2, MIF2, NKP1, NKP2, OKP1 and WIP1.

Functionally, dsDNA-binding component of a FANCM-MHF complex involved in DNA damage repair and genome maintenance. FANCM-MHF promotes gene conversion at blocked replication forks, probably by reversal of the stalled fork. Component of the kinetochore, a multiprotein complex that assembles on centromeric DNA and attaches chromosomes to spindle microtubules, mediating chromosome segregation and sister chromatid segregation during meiosis and mitosis. Component of the inner kinetochore constitutive centromere-associated network (CCAN), which serves as a structural platform for outer kinetochore assembly. The polypeptide is Inner kinetochore subunit MHF1 (Saccharomyces cerevisiae (strain ATCC 204508 / S288c) (Baker's yeast)).